The primary structure comprises 520 residues: Intermediate filament protein ON3 (520 aa).

Residues 1 to 27 (MSYTKKTSYSVKSSSSGSVPRSFSSMS) show a composition bias toward low complexity. Residues 1-33 (MSYTKKTSYSVKSSSSGSVPRSFSSMSYSGPSV) are disordered. A head region spans residues 1–108 (MSYTKKTSYS…DPNIQVVRTQ (108 aa)). Positions 109 to 144 (EKEQMKSLNNRFASFIDKVRFLEQQNKMLETKWSLL) are coil 1A. The IF rod domain occupies 109–420 (EKEQMKSLNN…KLLEGEEDRL (312 aa)). The segment at 145–157 (QNQTATRSNIDAM) is linker 1. A coil 1B region spans residues 158–253 (FEAYINNLRR…QIFEEEIREL (96 aa)). The tract at residues 254–273 (QSQIKDTSVVVEMDNSRNLD) is linker 12. The segment at 274–420 (MDAIVAEVRA…KLLEGEEDRL (147 aa)) is coil 2. A tail region spans residues 421-520 (LSGIKSVNIS…VSESSEVVQD (100 aa)).

The protein belongs to the intermediate filament family.

One of the non-neuronal predominant intermediate filament proteins of the visual pathway. The sequence is that of Intermediate filament protein ON3 from Carassius auratus (Goldfish).